The sequence spans 259 residues: ATP synthase subunit b 3 (259 aa).

The helical transmembrane segment at 5-27 (WWTLGLQAINVLILIWILSRFLF) threads the bilayer.

The protein belongs to the ATPase B chain family. F-type ATPases have 2 components, F(1) - the catalytic core - and F(0) - the membrane proton channel. F(1) has five subunits: alpha(3), beta(3), gamma(1), delta(1), epsilon(1). F(0) has three main subunits: a(1), b(2) and c(10-14). The alpha and beta chains form an alternating ring which encloses part of the gamma chain. F(1) is attached to F(0) by a central stalk formed by the gamma and epsilon chains, while a peripheral stalk is formed by the delta and b chains.

It localises to the cell inner membrane. In terms of biological role, f(1)F(0) ATP synthase produces ATP from ADP in the presence of a proton or sodium gradient. F-type ATPases consist of two structural domains, F(1) containing the extramembraneous catalytic core and F(0) containing the membrane proton channel, linked together by a central stalk and a peripheral stalk. During catalysis, ATP synthesis in the catalytic domain of F(1) is coupled via a rotary mechanism of the central stalk subunits to proton translocation. Functionally, component of the F(0) channel, it forms part of the peripheral stalk, linking F(1) to F(0). This chain is ATP synthase subunit b 3, found in Beijerinckia indica subsp. indica (strain ATCC 9039 / DSM 1715 / NCIMB 8712).